A 294-amino-acid polypeptide reads, in one-letter code: Lipoprotein NlpI (294 aa).

Residues 1–18 (MKPFLRWCFVATALTLAG) form the signal peptide. Residue Cys-19 is the site of N-palmitoyl cysteine attachment. Cys-19 carries S-diacylglycerol cysteine lipidation. TPR repeat units follow at residues 62–95 (AQLL…RPDM), 96–129 (PEVF…DPTY), and 234–267 (SETN…NVHN).

In terms of assembly, homodimer.

Its subcellular location is the cell membrane. May be involved in cell division. May play a role in bacterial septation or regulation of cell wall degradation during cell division. The sequence is that of Lipoprotein NlpI (nlpI) from Escherichia coli O157:H7.